We begin with the raw amino-acid sequence, 653 residues long: DNA-directed RNA polymerase III subunit rpc3 (653 aa).

4 disordered regions span residues 131–181 (PSNS…YTSS), 266–285 (PRGA…NKKA), 293–312 (DEDE…FGED), and 412–444 (VSQP…SDGN). The span at 138–169 (RASEERGGIHETEEYHGEEARQETEEHRETEG) shows a compositional bias: basic and acidic residues. Over residues 293 to 311 (DEDEDGGEENEWSDDDFGE) the composition is skewed to acidic residues. A leucine-zipper region spans residues 580–601 (TYKAMSRCLQRLRFERSRLKEF).

Belongs to the RNA polymerase beta chain family. Component of the RNA polymerase III (Pol III) complex consisting of 17 subunits.

The protein resides in the nucleus. In terms of biological role, DNA-dependent RNA polymerase catalyzes the transcription of DNA into RNA using the four ribonucleoside triphosphates as substrates. Specific core component of RNA polymerase III which synthesizes small RNAs, such as 5S rRNA and tRNAs. The protein is DNA-directed RNA polymerase III subunit rpc3 (rpc82) of Aspergillus oryzae (strain ATCC 42149 / RIB 40) (Yellow koji mold).